Reading from the N-terminus, the 156-residue chain is Small ribosomal subunit protein uS7 (156 aa).

The protein belongs to the universal ribosomal protein uS7 family. In terms of assembly, part of the 30S ribosomal subunit. Contacts proteins S9 and S11.

One of the primary rRNA binding proteins, it binds directly to 16S rRNA where it nucleates assembly of the head domain of the 30S subunit. Is located at the subunit interface close to the decoding center, probably blocks exit of the E-site tRNA. This chain is Small ribosomal subunit protein uS7, found in Synechococcus sp. (strain CC9902).